A 310-amino-acid chain; its full sequence is Methionyl-tRNA formyltransferase (310 aa).

111–114 serves as a coordination point for (6S)-5,6,7,8-tetrahydrofolate; the sequence is SLLP.

This sequence belongs to the Fmt family.

It carries out the reaction L-methionyl-tRNA(fMet) + (6R)-10-formyltetrahydrofolate = N-formyl-L-methionyl-tRNA(fMet) + (6S)-5,6,7,8-tetrahydrofolate + H(+). In terms of biological role, attaches a formyl group to the free amino group of methionyl-tRNA(fMet). The formyl group appears to play a dual role in the initiator identity of N-formylmethionyl-tRNA by promoting its recognition by IF2 and preventing the misappropriation of this tRNA by the elongation apparatus. This Rhodopseudomonas palustris (strain BisB18) protein is Methionyl-tRNA formyltransferase.